The sequence spans 598 residues: Mitochondrial distribution and morphology protein 30 (598 aa).

The region spanning 13-59 is the F-box domain; the sequence is SFTIDHLPPEIWLCISKLVGTSDLHNLCLINRRLYLTITSDEIWKRR.

In terms of assembly, interacts with SKP1. Component of the probable SCF(MDM30) complex containing CDC53, SKP1, RBX1 and MDM30. Interacts with SKP1 and FZO1.

The protein localises to the cytoplasm. Its subcellular location is the mitochondrion. It functions in the pathway protein modification; protein ubiquitination. In terms of biological role, substrate recognition component of a SCF (SKP1-CUL1-F-box protein) E3 ubiquitin-protein ligase complex which mediates the ubiquitination and subsequent proteasomal degradation of target proteins. Probably recognizes and binds to phosphorylated target proteins. Recognizes FZO1 and regulates the amount of FZO1. Regulatory factor for the mitochondrial fusion machinery. Required for mitochondrial DNA maintenance. The chain is Mitochondrial distribution and morphology protein 30 (MDM30) from Saccharomyces cerevisiae (strain ATCC 204508 / S288c) (Baker's yeast).